The chain runs to 309 residues: Protein MAK16 homolog (309 aa).

The segment at 194 to 309 (EADQFSEEEA…IEEETENQAN (116 aa)) is disordered. Acidic residues-rich tracts occupy residues 195–227 (ADQF…DIED) and 235–270 (VEGD…DDEE). Positions 275 to 293 (ITKKRGPTFKPTKKTPQKR) are enriched in basic residues. Positions 299–309 (EIEEETENQAN) are enriched in acidic residues.

It belongs to the MAK16 family.

It localises to the nucleus. Its subcellular location is the nucleolus. In Dictyostelium discoideum (Social amoeba), this protein is Protein MAK16 homolog (mak16l).